The following is a 111-amino-acid chain: Class I hydrophobin 2 (111 aa).

Positions 1 to 21 are cleaved as a signal peptide; that stretch reads MFSRVMFCTFLILPLLAAATA. Disulfide bonds link C30-C90, C37-C84, C38-C71, and C91-C104.

This sequence belongs to the fungal hydrophobin family. As to quaternary structure, self-assembles to form functional amyloid fibrils called rodlets. Self-assembly into fibrillar rodlets occurs spontaneously at hydrophobic:hydrophilic interfaces and the rodlets further associate laterally to form amphipathic monolayers. Behavior depends on environmental conditions: (1) when the pH increases or in the presence of Ca(2+) ions, an assembled state, beta-sheet rich, is formed; (2) when the solvent polarity increases, the vhm2 shows an increased tendency to reach hydrophobic/hydrophilic interfaces, with no detectable conformational change; and (3) at high temperature, a reversible conformational change and reversible aggregation occur. The physical and chemical properties, both in solution and as a biofilm, are affected by polysaccharides that act as hydrophilic stabilizer.

The protein resides in the secreted. It is found in the cell wall. Functionally, aerial growth, conidiation, and dispersal of filamentous fungi in the environment rely upon a capability of their secreting small amphipathic proteins called hydrophobins (HPBs) with low sequence identity. Class I can self-assemble into an outermost layer of rodlet bundles on aerial cell surfaces, conferring cellular hydrophobicity that supports fungal growth, development and dispersal; whereas Class II form highly ordered films at water-air interfaces through intermolecular interactions but contribute nothing to the rodlet structure. Vmh2 is a class I hydrophobin involved in biofilm formation and is essential for the maintenance of the surface hydrophobicity of the mycelium. Seems not to be involved in hyphal resistance against environmental stress. This Pleurotus ostreatus (strain PC15) (Oyster mushroom) protein is Class I hydrophobin 2.